A 333-amino-acid polypeptide reads, in one-letter code: Adenosine deaminase (333 aa).

2 residues coordinate Zn(2+): His12 and His14. His14, Asp16, and Gly170 together coordinate substrate. A Zn(2+)-binding site is contributed by His197. Glu200 acts as the Proton donor in catalysis. Residue Asp278 coordinates Zn(2+). Asp279 is a substrate binding site.

This sequence belongs to the metallo-dependent hydrolases superfamily. Adenosine and AMP deaminases family. Adenosine deaminase subfamily. The cofactor is Zn(2+).

The catalysed reaction is adenosine + H2O + H(+) = inosine + NH4(+). The enzyme catalyses 2'-deoxyadenosine + H2O + H(+) = 2'-deoxyinosine + NH4(+). Functionally, catalyzes the hydrolytic deamination of adenosine and 2-deoxyadenosine. This chain is Adenosine deaminase, found in Klebsiella pneumoniae subsp. pneumoniae (strain ATCC 700721 / MGH 78578).